The sequence spans 86 residues: Small ribosomal subunit protein bS20 (86 aa).

Residues 1-27 are compositionally biased toward basic residues; that stretch reads MANSKSAKKRATQAERRRQHNASRRSM. The interval 1 to 28 is disordered; that stretch reads MANSKSAKKRATQAERRRQHNASRRSMM.

It belongs to the bacterial ribosomal protein bS20 family.

In terms of biological role, binds directly to 16S ribosomal RNA. This chain is Small ribosomal subunit protein bS20, found in Aliivibrio fischeri (strain MJ11) (Vibrio fischeri).